Here is a 250-residue protein sequence, read N- to C-terminus: 3-deoxy-manno-octulosonate cytidylyltransferase (250 aa).

Belongs to the KdsB family.

The protein localises to the cytoplasm. It carries out the reaction 3-deoxy-alpha-D-manno-oct-2-ulosonate + CTP = CMP-3-deoxy-beta-D-manno-octulosonate + diphosphate. It participates in nucleotide-sugar biosynthesis; CMP-3-deoxy-D-manno-octulosonate biosynthesis; CMP-3-deoxy-D-manno-octulosonate from 3-deoxy-D-manno-octulosonate and CTP: step 1/1. It functions in the pathway bacterial outer membrane biogenesis; lipopolysaccharide biosynthesis. Its function is as follows. Activates KDO (a required 8-carbon sugar) for incorporation into bacterial lipopolysaccharide in Gram-negative bacteria. The chain is 3-deoxy-manno-octulosonate cytidylyltransferase from Legionella pneumophila (strain Lens).